The sequence spans 185 residues: Peptidoglycan-recognition protein SC1a (185 aa).

The N-terminal stretch at 1-21 is a signal peptide; the sequence is MVSKVALLLAVLVCSQYMAQG. The N-acetylmuramoyl-L-alanine amidase domain occupies 46–170; that stretch reads SYAIIHHTAG…RQVSATECPG (125 aa). H51 contributes to the Zn(2+) binding site. The cysteines at positions 58 and 64 are disulfide-linked. Zn(2+) contacts are provided by H160 and C168.

It belongs to the N-acetylmuramoyl-L-alanine amidase 2 family. Requires Zn(2+) as cofactor.

The protein localises to the secreted. It catalyses the reaction Hydrolyzes the link between N-acetylmuramoyl residues and L-amino acid residues in certain cell-wall glycopeptides.. In terms of biological role, N-acetylmuramyl-L-alanine amidase involved in innate immunity by degrading bacterial peptidoglycans (PGN). Plays a scavenger role by digesting biologically active PGN into biologically inactive fragments. Has no direct bacteriolytic activity. This Drosophila melanogaster (Fruit fly) protein is Peptidoglycan-recognition protein SC1a.